Consider the following 1679-residue polypeptide: Protein MLP2 (1679 aa).

4 coiled-coil regions span residues 32 to 176 (AKFE…KYDT), 233 to 466 (YNKF…RQVK), 516 to 1064 (FSNV…EREL), and 1099 to 1491 (KLVS…ENAG). 3 short sequence motifs (bipartite nuclear localization signal) span residues 417 to 433 (KRST…KRKQ), 639 to 655 (RKEL…KKTT), and 1433 to 1449 (KKEW…RRIK). 2 disordered regions span residues 1495 to 1521 (FLDN…SERP) and 1632 to 1679 (DLTN…ASNE). Polar residues-rich tracts occupy residues 1511–1520 (NSPSKGNSER) and 1646–1661 (IGST…TSSD). Ser1512 carries the post-translational modification Phosphoserine. Residues 1662–1671 (PDTKKVKESP) are compositionally biased toward basic and acidic residues. Phosphoserine is present on Ser1670.

As to quaternary structure, component of the nuclear complex (NPC). NPC constitutes the exclusive means of nucleocytoplasmic transport. NPCs allow the passive diffusion of ions and small molecules and the active, nuclear transport receptor-mediated bidirectional transport of macromolecules such as proteins, RNAs, ribonucleoparticles (RNPs), and ribosomal subunits across the nuclear envelope. Due to its 8-fold rotational symmetry, all subunits are present with 8 copies or multiples thereof. Interacts with NUP60 and NIC96, which tether it to the nuclear pore complex. Component of the spindle pole body core in which it interacts directly with SPC110, SPC42 and SPC29. Also interacts with YKU70 (HDF1) and MLP1.

It is found in the nucleus. It localises to the cytoplasm. The protein localises to the cytoskeleton. Its subcellular location is the microtubule organizing center. The protein resides in the spindle pole body. It is found in the nuclear pore complex. Functionally, together with the closely related MLP1, involved in the structural and functional organization of perinuclear chromatin. MLP1/MLP2 associate with the nuclear pore complex and form filamentous structures along the nuclear periphery. Has a role in the localization of Esc1 to nucleolar regions. Together with MLP1, mediates tethering of the some telomeres to the nuclear periphery, probably mediated by YKU70/YKU80 (HDF1/HDF2) heterodimer and show perinuclear location dependent silencing. MLP1 and MLP2 are involved in telomere length regulation but not silencing or telomere anchoring. Plays a role in the incorporation of components into the spindle pole body. Involved in double-strand break repair, probably also mediated by the YKU70/YKU80 (HDF1/HDF2) heterodimer. The polypeptide is Protein MLP2 (MLP2) (Saccharomyces cerevisiae (strain ATCC 204508 / S288c) (Baker's yeast)).